The chain runs to 284 residues: 2-dehydro-3-deoxyphosphooctonate aldolase (284 aa).

This sequence belongs to the KdsA family.

It is found in the cytoplasm. It catalyses the reaction D-arabinose 5-phosphate + phosphoenolpyruvate + H2O = 3-deoxy-alpha-D-manno-2-octulosonate-8-phosphate + phosphate. The protein operates within carbohydrate biosynthesis; 3-deoxy-D-manno-octulosonate biosynthesis; 3-deoxy-D-manno-octulosonate from D-ribulose 5-phosphate: step 2/3. Its pathway is bacterial outer membrane biogenesis; lipopolysaccharide biosynthesis. The protein is 2-dehydro-3-deoxyphosphooctonate aldolase of Escherichia fergusonii (strain ATCC 35469 / DSM 13698 / CCUG 18766 / IAM 14443 / JCM 21226 / LMG 7866 / NBRC 102419 / NCTC 12128 / CDC 0568-73).